Reading from the N-terminus, the 209-residue chain is Putative tripartite motif-containing protein 61 (209 aa).

The RING-type zinc-finger motif lies at 16–57 (CPICLDYLKDPVTISCGHNFCLSCIIMSWKDLHDSFPCPFCH). Residues 92-133 (EEKHVCKKHNQVLTFFCQKDLELLCPRCSLSTDHQHHCVWPI) form a B box-type zinc finger. Positions 97, 100, 119, and 125 each coordinate Zn(2+).

The sequence is that of Putative tripartite motif-containing protein 61 (TRIM61) from Homo sapiens (Human).